The primary structure comprises 301 residues: Probable alpha-L-glutamate ligase (301 aa).

In terms of domain architecture, ATP-grasp spans 104–287 (LQLLSRKGIG…VAGLIYEFIE (184 aa)). Residues Lys141, 178 to 179 (EF), Asp187, and 211 to 213 (RSN) each bind ATP. Mg(2+) contacts are provided by Asp248, Glu260, and Asn262. Mn(2+) contacts are provided by Asp248, Glu260, and Asn262.

Belongs to the RimK family. Mg(2+) is required as a cofactor. Mn(2+) serves as cofactor.

The polypeptide is Probable alpha-L-glutamate ligase (Shewanella loihica (strain ATCC BAA-1088 / PV-4)).